The sequence spans 106 residues: Small ribosomal subunit protein uS10 (106 aa).

This sequence belongs to the universal ribosomal protein uS10 family. Part of the 30S ribosomal subunit.

Involved in the binding of tRNA to the ribosomes. This chain is Small ribosomal subunit protein uS10, found in Synechococcus sp. (strain CC9902).